The sequence spans 236 residues: Protein YIPF6 (236 aa).

Ala-2 bears the N-acetylalanine mark. Over 2–84 the chain is Cytoplasmic; sequence AEAVESPGDP…HVLYPRKSNT (83 aa). Position 7 is a phosphoserine (Ser-7). The chain crosses the membrane as a helical span at residues 85–105; the sequence is LLRDWDLWGPLILCVTLALML. Over 106–115 the chain is Lumenal; sequence QRGSVDSEKD. The chain crosses the membrane as a helical span at residues 116-136; sequence GGPQFAEVFVIVWFGAVTITL. Over 137–146 the chain is Cytoplasmic; it reads NSKLLGGNIS. The chain crosses the membrane as a helical span at residues 147–167; sequence FFQSLCVLGYCILPLTMAMLV. Over 168 to 184 the chain is Lumenal; sequence CRLVLLAEPGPVNFMVR. Residues 185-205 form a helical membrane-spanning segment; the sequence is LFVVIIMFAWSIVASTAFLAD. Residues 206–212 lie on the Cytoplasmic side of the membrane; sequence SQPPNRK. A helical transmembrane segment spans residues 213–233; sequence ALAVYPVFLFYFVISWMILTF. Residues 234-236 lie on the Lumenal side of the membrane; the sequence is TPQ.

The protein belongs to the YIP1 family. As to quaternary structure, predominantly interacts with YIPF1 or YIPF2, but may also form a ternary complex with YIPF1 and YIPF2. This interaction may stabilize YIPF1 and YIPF2.

Its subcellular location is the golgi apparatus membrane. Its function is as follows. May be required for stable YIPF1 and YIPF2 protein expression. This chain is Protein YIPF6 (YIPF6), found in Bos taurus (Bovine).